The chain runs to 357 residues: Heat-inducible transcription repressor HrcA (357 aa).

It belongs to the HrcA family.

Its function is as follows. Negative regulator of class I heat shock genes (grpE-dnaK-dnaJ and groELS operons). Prevents heat-shock induction of these operons. This chain is Heat-inducible transcription repressor HrcA, found in Ureaplasma parvum serovar 3 (strain ATCC 27815 / 27 / NCTC 11736).